Consider the following 150-residue polypeptide: Probable cyclase FGR4 (150 aa).

Its pathway is secondary metabolite biosynthesis. Probable cyclase; part of the gene cluster that mediates the biosynthesis of the tetraketides fugralins such as linear fugralin A and cyclic fugralin B, volatile compounds that play a role in the asexual reproductive cycle but are not involved in pathogenicity. Fugralin B is similar to fugralin A except for a cyclization between the carboxylic acid C-8 and the alcohol on C-4 resulting in a six membered lactone ring, probably catalyzed by the cyclase FGR4. One of the key features of fugralins is the presence of a double methyl group, which is only rarely encountered in fungal secondary metabolites. As the fugralins cluster does not contain an independent methyltransferase, the PKS FGR1 is probably responsible for adding two methyl groups to the same carbon atom. The exact role of the individual cluster genes remains unknown and further work is needed to unravel the biosynthetic pathway. In Gibberella zeae (strain ATCC MYA-4620 / CBS 123657 / FGSC 9075 / NRRL 31084 / PH-1) (Wheat head blight fungus), this protein is Probable cyclase FGR4.